The chain runs to 358 residues: Protein RecA (358 aa).

69-76 (GPESSGKT) is an ATP binding site.

The protein belongs to the RecA family.

It is found in the cytoplasm. In terms of biological role, can catalyze the hydrolysis of ATP in the presence of single-stranded DNA, the ATP-dependent uptake of single-stranded DNA by duplex DNA, and the ATP-dependent hybridization of homologous single-stranded DNAs. It interacts with LexA causing its activation and leading to its autocatalytic cleavage. The protein is Protein RecA of Trichormus variabilis (strain ATCC 29413 / PCC 7937) (Anabaena variabilis).